Reading from the N-terminus, the 717-residue chain is Probable inactive histone-lysine N-methyltransferase SUVR2 (717 aa).

A compositionally biased stretch (basic and acidic residues) spans 61-73 (QAIQESEEKKADE). Residues 61–136 (QAIQESEEKK…LGSPTLEGPS (76 aa)) are disordered. Over residues 120–130 (SALASPSLGSP) the composition is skewed to low complexity. 9 residues coordinate Zn(2+): Cys445, Cys446, Cys449, Cys453, Cys462, Cys529, Cys533, Cys535, and Cys539. The 90-residue stretch at 458–547 (MACRCATAFN…NCGNRVVQQG (90 aa)) folds into the Pre-SET domain. Residues 550–679 (NKLQVFFTPN…AMEELTWDYG (130 aa)) enclose the SET domain. S-adenosyl-L-methionine-binding positions include 561–563 (RGW) and 635–636 (NH). A Zn(2+)-binding site is contributed by Cys638. Residue Tyr678 coordinates S-adenosyl-L-methionine. The Post-SET domain maps to 690–706 (SPFHCQCGSDFCRVRKQ). Zn(2+)-binding residues include Cys694, Cys696, and Cys701.

This sequence belongs to the class V-like SAM-binding methyltransferase superfamily. Histone-lysine methyltransferase family. As to quaternary structure, interacts with SUVR1, CHR19, CHR28 and itself. Interacts with CHR27.

The protein resides in the nucleus. Its subcellular location is the chromosome. Probable inactive histone-lysine methyltransferase that acts as regulator of transctiptional gene silencing independently of histone H3K9 methylation. Contributes to transcriptional gene silencing at RNA-directed DNA methylation (RdDM) target loci but also at RdDM-independent target loci. Forms a complex with SUVR1 and associates with the SNF2-related chromatin-remodeling proteins CHR19, CHR27, and CHR28, thereby mediating nucleosome positioning and transcriptional silencing. Does not possess histone-lysine methyltransferase activity in vitro, and the conserved catalytic sites of SUVR2 are dispensable for its function in transcriptional gene silencing. In Arabidopsis thaliana (Mouse-ear cress), this protein is Probable inactive histone-lysine N-methyltransferase SUVR2 (SUVR2).